The chain runs to 156 residues: Ribosomal RNA large subunit methyltransferase H (156 aa).

Residues Gly-104 and 123 to 128 (LSPMVM) each bind S-adenosyl-L-methionine.

Belongs to the RNA methyltransferase RlmH family. Homodimer.

It is found in the cytoplasm. The enzyme catalyses pseudouridine(1915) in 23S rRNA + S-adenosyl-L-methionine = N(3)-methylpseudouridine(1915) in 23S rRNA + S-adenosyl-L-homocysteine + H(+). In terms of biological role, specifically methylates the pseudouridine at position 1915 (m3Psi1915) in 23S rRNA. The sequence is that of Ribosomal RNA large subunit methyltransferase H from Bdellovibrio bacteriovorus (strain ATCC 15356 / DSM 50701 / NCIMB 9529 / HD100).